Here is a 118-residue protein sequence, read N- to C-terminus: Large ribosomal subunit protein bL19 (118 aa).

The protein belongs to the bacterial ribosomal protein bL19 family.

This protein is located at the 30S-50S ribosomal subunit interface and may play a role in the structure and function of the aminoacyl-tRNA binding site. The protein is Large ribosomal subunit protein bL19 of Parafrankia sp. (strain EAN1pec).